We begin with the raw amino-acid sequence, 311 residues long: Olfactory receptor 1L4 (311 aa).

Over 1–26 (METKNYSSSTSGFILLGLSSNPKLQK) the chain is Extracellular. The N-linked (GlcNAc...) asparagine glycan is linked to Asn-5. The helical transmembrane segment at 27 to 50 (PLFAIFLIMYLLTAVGNVLIILAI) threads the bilayer. The Cytoplasmic segment spans residues 51–58 (YSDPRLHT). A helical transmembrane segment spans residues 59–80 (PMYFFLSNLSFMDICFTTVIVP). The Extracellular portion of the chain corresponds to 81–101 (KMLVNFLSETKIISYVGCLIQ). Cys-98 and Cys-190 form a disulfide bridge. The helical transmembrane segment at 102–121 (MYFFMAFGNTDSYLLASMAI) threads the bilayer. The Cytoplasmic portion of the chain corresponds to 122-140 (DRLVAICNPLHYDVVMKPW). The helical transmembrane segment at 141–159 (HCLLMLLGSCSISHLHSLF) threads the bilayer. Residues 160–197 (RVLLMSRLSFCASHIIKHFFCDTQPVLKLSCSDTSSSQ) are Extracellular-facing. A helical transmembrane segment spans residues 198–220 (MVVMTETLAVIVTPFLCTIFSYL). The Cytoplasmic portion of the chain corresponds to 221 to 237 (QIIVTVLRIPSAAGKWK). The chain crosses the membrane as a helical span at residues 238-260 (AFSTCGSHLTVVVLFYGSVIYVY). Topologically, residues 261–273 (FRPLSMYSVMKGR) are extracellular. A helical transmembrane segment spans residues 274 to 293 (VATVMYTVVTPMLNPFIYSL). Over 294–311 (RNKDMKRGLKKLRHRIYS) the chain is Cytoplasmic.

It belongs to the G-protein coupled receptor 1 family.

The protein resides in the cell membrane. Its function is as follows. Odorant receptor. The polypeptide is Olfactory receptor 1L4 (OR1L4) (Homo sapiens (Human)).